The following is a 584-amino-acid chain: MGGLEKKKYERGSATNYITRNKARKKLQLSLPDFRRLCILKGIYPHEPKHKKKVNKGSTAARTFYLIKDIKFLLHEPIVNKFREYKVFVRKLRKAYGKSEWNAVERLKDNKPCYKLDHIVKERYPTFIDALRDLDDALSMCFLFSTFPRTGKCHVQTIQLCRRLTVEFLHYVITARALRKVFLSIKGIYYQAEVLGQPIVWIAPYAFSHDHPTDVDYRVMATFTEFYTTLLGFVNFRLYQSLNLHYPPKLEGQAQAETKISEDTYALDSESSMEKLAALSASLARVVVPAIEEAEADEFPTDGEVTAQEEDRKKELEAQEKHKKLFEGLKFFLNREVPREALAFIIRSFGGDVSWDKSLCIGATYDVTDSCITHQIVDRPGQQTPIIGRYYVQPQWVFDCVNARLLLPVAEYFPGMQLPPHLSPFVSEKEGDYIPPEKLKLLALQRGEDPGHLEEEEEEDEDDDNEGDVAAENEEEDVEVESEEEEEEEVHLSALEQHRLEEKKPQVMAGTVKLEDKQRLAQEEESEAKRLAIMMMKKREKYLYQKIMFGKRRKIREANKLAEKRKAHDDAVRSEKKAKRTRPV.

Residues 1–54 (MGGLEKKKYERGSATNYITRNKARKKLQLSLPDFRRLCILKGIYPHEPKHKKKV) are required for 28S ribosomal RNA processing. Residues 1 to 257 (MGGLEKKKYE…PKLEGQAQAE (257 aa)) form a sufficient for nucleolar localization region. An N6-acetyllysine modification is found at lysine 98. Residues 312 to 414 (RKKELEAQEK…LLLPVAEYFP (103 aa)) are sufficient for interaction with MAP1B. Residues 321-414 (KHKKLFEGLK…LLLPVAEYFP (94 aa)) form the BRCT domain. The interval 449 to 510 (DPGHLEEEEE…EEKKPQVMAG (62 aa)) is disordered. Positions 454-489 (EEEEEEDEDDDNEGDVAAENEEEDVEVESEEEEEEE) are enriched in acidic residues. Basic and acidic residues predominate over residues 496-505 (EQHRLEEKKP). Residue lysine 513 forms a Glycyl lysine isopeptide (Lys-Gly) (interchain with G-Cter in SUMO1); alternate linkage. Lysine 513 is covalently cross-linked (Glycyl lysine isopeptide (Lys-Gly) (interchain with G-Cter in SUMO2); alternate). Residues 535 to 584 (MMKKREKYLYQKIMFGKRRKIREANKLAEKRKAHDDAVRSEKKAKRTRPV) are required for 28S ribosomal RNA processing. Over residues 560–575 (KLAEKRKAHDDAVRSE) the composition is skewed to basic and acidic residues. The segment at 560–584 (KLAEKRKAHDDAVRSEKKAKRTRPV) is disordered.

It belongs to the pescadillo family. As to quaternary structure, component of the PeBoW complex, composed of BOP1, PES1 and WDR12. The complex is held together by BOP1, which interacts with PES1 via its N-terminal domain and with WDR12 via a high-affinity interaction between the seven-bladed beta-propeller domains of the 2 proteins. The PeBoW complex associates with the 66S pre-ribosome. The PeBoW complex also associates with DDX27, PES1 interacts directly with DDX27. Interacts with IRS1 and UBTF. May interact with MAP1B. Sumoylated. In terms of tissue distribution, ubiquitous. Highest levels appear to be found in tissues that contain a population of proliferating cells, such as ovary and testis. Also appears to be highly expressed in kidney and liver. In the brain expression is restricted to neural progenitor cells and postmitotic neurons. Highly expressed in malignant astrocytes.

Its subcellular location is the nucleus. It is found in the nucleolus. It localises to the nucleoplasm. The protein localises to the chromosome. Its function is as follows. Component of the PeBoW complex, which is required for maturation of 28S and 5.8S ribosomal RNAs and formation of the 60S ribosome. In Mus musculus (Mouse), this protein is Pescadillo homolog (Pes1).